Consider the following 374-residue polypeptide: Glutamate 5-kinase (374 aa).

K9 is an ATP binding site. Substrate contacts are provided by S49, D136, and N148. Residues 168–169 (TD) and 210–216 (TGGMRSK) contribute to the ATP site. The PUA domain occupies 276–354 (AGMITVDSGA…EEARQYSYLH (79 aa)).

Belongs to the glutamate 5-kinase family.

It is found in the cytoplasm. It carries out the reaction L-glutamate + ATP = L-glutamyl 5-phosphate + ADP. Its pathway is amino-acid biosynthesis; L-proline biosynthesis; L-glutamate 5-semialdehyde from L-glutamate: step 1/2. Catalyzes the transfer of a phosphate group to glutamate to form L-glutamate 5-phosphate. In Geobacillus kaustophilus (strain HTA426), this protein is Glutamate 5-kinase.